A 155-amino-acid chain; its full sequence is Transcription antitermination protein NusB (155 aa).

The protein belongs to the NusB family.

Its function is as follows. Involved in transcription antitermination. Required for transcription of ribosomal RNA (rRNA) genes. Binds specifically to the boxA antiterminator sequence of the ribosomal RNA (rrn) operons. The sequence is that of Transcription antitermination protein NusB from Mesorhizobium japonicum (strain LMG 29417 / CECT 9101 / MAFF 303099) (Mesorhizobium loti (strain MAFF 303099)).